We begin with the raw amino-acid sequence, 195 residues long: Transcriptional regulator GfcR (195 aa).

This sequence belongs to the purine/pyrimidine phosphoribosyltransferase family. GfcR subfamily.

The polypeptide is Transcriptional regulator GfcR (Archaeoglobus fulgidus (strain ATCC 49558 / DSM 4304 / JCM 9628 / NBRC 100126 / VC-16)).